The primary structure comprises 395 residues: Multidrug resistance protein MdtL (395 aa).

Residues M1 to R3 lie on the Cytoplasmic side of the membrane. A helical transmembrane segment spans residues F4–V24. At G25–H41 the chain is on the periplasmic side. The chain crosses the membrane as a helical span at residues I42–A62. At D63 to K68 the chain is on the cytoplasmic side. A helical transmembrane segment spans residues P69 to S89. Topologically, residues E90–S92 are periplasmic. The helical transmembrane segment at L93–F113 threads the bilayer. At A114–S130 the chain is on the cytoplasmic side. The chain crosses the membrane as a helical span at residues L131 to M151. Over L152–Q157 the chain is Periplasmic. A helical membrane pass occupies residues S158 to L178. Residues R179–S216 are Cytoplasmic-facing. A helical membrane pass occupies residues V217–F237. The Periplasmic segment spans residues S238 to M246. A helical transmembrane segment spans residues A247 to F267. At K268 to R270 the chain is on the cytoplasmic side. A helical transmembrane segment spans residues T271–H291. Residues T292–T294 are Periplasmic-facing. Residues V295–M315 form a helical membrane-spanning segment. Residues S316–T332 are Cytoplasmic-facing. A helical membrane pass occupies residues L333–I353. Residues S354–N357 lie on the Periplasmic side of the membrane. Residues M358 to A378 traverse the membrane as a helical segment. Over P379–S395 the chain is Cytoplasmic.

It belongs to the major facilitator superfamily. DHA1 family. MdtL (TC 2.A.1.2.22) subfamily.

The protein localises to the cell inner membrane. This chain is Multidrug resistance protein MdtL (mdtL), found in Salmonella typhi.